Reading from the N-terminus, the 61-residue chain is Adipokinetic prohormone type 2 (61 aa).

A signal peptide spans 1-22 (MTQSCTLTLVLVVAVLAALATA). Glutamine 23 bears the Pyrrolidone carboxylic acid mark. Residue tryptophan 30 is modified to Tryptophan amide.

This sequence belongs to the AKH/HRTH/RPCH family. In terms of assembly, adipokinetic hormone precursor-related peptide (APRP) can form three type of disulfide-bond dimers: p1 (alpha-alpha), p2 (alpha-beta), and p3 (beta-beta).

The protein resides in the secreted. This hormone, released from cells in the corpora cardiaca, causes release of diglycerides from the fat body and stimulation of muscles to use these diglycerides as an energy source during energy-demanding processes. The polypeptide is Adipokinetic prohormone type 2 (Locusta migratoria (Migratory locust)).